Reading from the N-terminus, the 338-residue chain is Fructose-1,6-bisphosphatase 1 (338 aa).

Thr2 bears the N-acetylthreonine mark. AMP is bound by residues Val18–Gly22 and Thr28–Thr32. 2 residues coordinate Mg(2+): Asp69 and Glu98. Position 113–114 (Lys113–Tyr114) interacts with AMP. Mg(2+) is bound by residues Asp119, Leu121, and Asp122. Residue Asp122 to Ser125 coordinates substrate. Arg141 contacts AMP. Lys151 carries the post-translational modification N6-succinyllysine. Ser208 carries the phosphoserine; by PKA modification. Substrate-binding positions include Asn213–Tyr216, Arg244–Met249, Tyr265, and Lys275–Arg277. Residues Tyr216, Tyr245, and Tyr265 each carry the phosphotyrosine modification. Glu281 contributes to the Mg(2+) binding site.

Belongs to the FBPase class 1 family. As to quaternary structure, homotetramer. Mg(2+) serves as cofactor.

It carries out the reaction beta-D-fructose 1,6-bisphosphate + H2O = beta-D-fructose 6-phosphate + phosphate. It functions in the pathway carbohydrate biosynthesis; gluconeogenesis. Subject to complex allosteric regulation. The enzyme can assume an active R-state, or an inactive T-state. Intermediate conformations may exist. AMP acts as an allosteric inhibitor. AMP binding affects the turnover of bound substrate and not the affinity for substrate. Fructose 2,6-bisphosphate acts as a competitive inhibitor. Fructose 2,6-bisphosphate and AMP have synergistic effects. Catalyzes the hydrolysis of fructose 1,6-bisphosphate to fructose 6-phosphate in the presence of divalent cations, acting as a rate-limiting enzyme in gluconeogenesis. Plays a role in regulating glucose sensing and insulin secretion of pancreatic beta-cells. Appears to modulate glycerol gluconeogenesis in liver. Important regulator of appetite and adiposity; increased expression of the protein in liver after nutrient excess increases circulating satiety hormones and reduces appetite-stimulating neuropeptides and thus seems to provide a feedback mechanism to limit weight gain. This is Fructose-1,6-bisphosphatase 1 (FBP1) from Sus scrofa (Pig).